A 943-amino-acid polypeptide reads, in one-letter code: Translation initiation factor IF-2 (943 aa).

The disordered stretch occupies residues 30–357; that stretch reads SVKSHSSSVE…KPVTERKFHE (328 aa). Composition is skewed to basic and acidic residues over residues 69–82, 112–137, 145–155, 163–196, and 224–253; these read PKEE…DKAS, FKAE…DNRN, QGKRHNNDRRN, DHNK…RDNA, and RQSE…EKQQ. The span at 254–266 shows a compositional bias: low complexity; the sequence is VKVAVQKAAAETK. The span at 296 to 309 shows a compositional bias: basic and acidic residues; the sequence is KSRDNRRVNEDGPK. Over residues 313–332 the composition is skewed to low complexity; sequence NNKWNNQNQVRNQRNSNWNK. Positions 445–614 constitute a tr-type G domain; the sequence is ERAPVVTIMG…LLVAEVEELK (170 aa). Residues 454-461 are G1; the sequence is GHVDHGKT. 454-461 contributes to the GTP binding site; sequence GHVDHGKT. Residues 479-483 are G2; the sequence is GITQH. The G3 stretch occupies residues 500–503; the sequence is DTPG. GTP contacts are provided by residues 500 to 504 and 554 to 557; these read DTPGH and NKID. The segment at 554-557 is G4; sequence NKID. Residues 590 to 592 are G5; that stretch reads SAK.

The protein belongs to the TRAFAC class translation factor GTPase superfamily. Classic translation factor GTPase family. IF-2 subfamily.

It is found in the cytoplasm. Its function is as follows. One of the essential components for the initiation of protein synthesis. Protects formylmethionyl-tRNA from spontaneous hydrolysis and promotes its binding to the 30S ribosomal subunits. Also involved in the hydrolysis of GTP during the formation of the 70S ribosomal complex. This chain is Translation initiation factor IF-2, found in Streptococcus thermophilus (strain ATCC BAA-250 / LMG 18311).